A 229-amino-acid polypeptide reads, in one-letter code: Golgi to ER traffic protein 1 (229 aa).

At 1 to 14 (MGILAALDLHPYTL) the chain is on the lumenal side. Residues 15 to 34 (VVSSFTVLLIQQLVGFIGKS) traverse the membrane as a helical segment. At 35–122 (TIQEFAWLFY…KINSLVGVVL (88 aa)) the chain is on the cytoplasmic side. Residues 60–117 (HTKKQEELHKLNREKRSISAQDEYAKWTKLNRQAEKLTAEVKSLSDDIAKDKSKINSL) adopt a coiled-coil conformation. The helical transmembrane segment at 123–143 (LFLTTLPLWVFRLWFRKSVLF) threads the bilayer. At 144–167 (YLPTGVFPYYVERVLAIPFFASGS) the chain is on the lumenal side. The helical transmembrane segment at 168 to 184 (VGLTVWMFAVNNVISSV) threads the bilayer. Residues 185–229 (LFLLTFPFKPSVPIPIRQTKVEEVVPESAESKESSPEVIDIADAN) lie on the Cytoplasmic side of the membrane. The segment covering 210 to 219 (PESAESKESS) has biased composition (basic and acidic residues). The segment at 210 to 229 (PESAESKESSPEVIDIADAN) is disordered.

This sequence belongs to the WRB/GET1 family. In terms of assembly, component of the Golgi to ER traffic (GET) complex, which is composed of GET1, GET2 and GET3. Within the complex, GET1 and GET2 form a heterotetramer which is stabilized by phosphatidylinositol binding and which binds to the GET3 homodimer.

It is found in the endoplasmic reticulum membrane. The protein resides in the golgi apparatus membrane. Functionally, required for the post-translational delivery of tail-anchored (TA) proteins to the endoplasmic reticulum. Together with GET2, acts as a membrane receptor for soluble GET3, which recognizes and selectively binds the transmembrane domain of TA proteins in the cytosol. The GET complex cooperates with the HDEL receptor ERD2 to mediate the ATP-dependent retrieval of resident ER proteins that contain a C-terminal H-D-E-L retention signal from the Golgi to the ER. The protein is Golgi to ER traffic protein 1 of Scheffersomyces stipitis (strain ATCC 58785 / CBS 6054 / NBRC 10063 / NRRL Y-11545) (Yeast).